The following is a 467-amino-acid chain: tRNA dimethylallyltransferase (467 aa).

Residues 1 to 47 (MASVAAARAVPVGSGLRGLQRTLPLVVILGATGTGKSTLALQLGQRL) constitute a mitochondrion transit peptide. Dimethylallyl diphosphate is bound at residue 32 to 37 (TGTGKS). Interaction with substrate tRNA stretches follow at residues 55 to 58 (DSMQ) and 183 to 187 (RKVAR). The tract at residues 221-230 (FSNPCILWLH) is core aggregation region. An interaction with isopentenylpyrophosphate transferase region spans residues 233–255 (QAVLDERLDKRVDDMLAAGLLEE). Interaction with substrate tRNA stretches follow at residues 281-283 (QSI) and 313-331 (ALKQ…WVKN). Residues 395-425 (HLCDLCDRIIIGDREWAAHIKSKSHLNQLKK) form a Matrin-type zinc finger. The segment at 429–467 (LDSDAVNTIESQSVSPDHNKEPKEKGSPGQNDQELKCSV) is disordered. Residues 433–444 (AVNTIESQSVSP) are compositionally biased toward polar residues. Phosphoserine is present on serine 443. Over residues 445–454 (DHNKEPKEKG) the composition is skewed to basic and acidic residues. Serine 455 carries the phosphoserine modification.

It belongs to the IPP transferase family.

The protein resides in the mitochondrion. Its subcellular location is the cytoplasm. It catalyses the reaction adenosine(37) in tRNA + dimethylallyl diphosphate = N(6)-dimethylallyladenosine(37) in tRNA + diphosphate. Its function is as follows. Catalyzes the transfer of a dimethylallyl group onto the adenine at position 37 of both cytosolic and mitochondrial tRNAs, leading to the formation of N6-(dimethylallyl)adenosine (i6A37). Mediates modification of a limited subset of tRNAs: tRNA(Ser)(AGA), tRNA(Ser)(CGA), tRNA(Ser)(UGA), as well as partial modification of the selenocysteine tRNA(Ser)(UCA). TRIT1 is therefore required for selenoprotein expression. The sequence is that of tRNA dimethylallyltransferase (TRIT1) from Homo sapiens (Human).